The primary structure comprises 149 residues: Large ribosomal subunit protein uL22 (149 aa).

It belongs to the universal ribosomal protein uL22 family. As to quaternary structure, part of the 50S ribosomal subunit.

In terms of biological role, this protein binds specifically to 23S rRNA; its binding is stimulated by other ribosomal proteins, e.g. L4, L17, and L20. It is important during the early stages of 50S assembly. It makes multiple contacts with different domains of the 23S rRNA in the assembled 50S subunit and ribosome. The globular domain of the protein is located near the polypeptide exit tunnel on the outside of the subunit, while an extended beta-hairpin is found that lines the wall of the exit tunnel in the center of the 70S ribosome. This is Large ribosomal subunit protein uL22 from Petrotoga mobilis (strain DSM 10674 / SJ95).